A 124-amino-acid polypeptide reads, in one-letter code: Small ribosomal subunit protein uS12 (124 aa).

Position 89 is a 3-methylthioaspartic acid (aspartate 89). Residues 105-124 are disordered; it reads QGVKNRKQARSRYGAKKEKS. A compositionally biased stretch (basic residues) spans 108–118; the sequence is KNRKQARSRYG.

This sequence belongs to the universal ribosomal protein uS12 family. As to quaternary structure, part of the 30S ribosomal subunit. Contacts proteins S8 and S17. May interact with IF1 in the 30S initiation complex.

Its function is as follows. With S4 and S5 plays an important role in translational accuracy. In terms of biological role, interacts with and stabilizes bases of the 16S rRNA that are involved in tRNA selection in the A site and with the mRNA backbone. Located at the interface of the 30S and 50S subunits, it traverses the body of the 30S subunit contacting proteins on the other side and probably holding the rRNA structure together. The combined cluster of proteins S8, S12 and S17 appears to hold together the shoulder and platform of the 30S subunit. The sequence is that of Small ribosomal subunit protein uS12 from Mycobacterium avium (strain 104).